The sequence spans 355 residues: Erythronate-4-phosphate dehydrogenase (355 aa).

Residues Ser45 and Thr66 each contribute to the substrate site. Asp146 serves as a coordination point for NAD(+). Arg206 is a catalytic residue. Residue Asp229 participates in NAD(+) binding. Glu234 is a catalytic residue. The active-site Proton donor is His251. Gly254 provides a ligand contact to NAD(+). A substrate-binding site is contributed by Tyr255.

This sequence belongs to the D-isomer specific 2-hydroxyacid dehydrogenase family. PdxB subfamily. As to quaternary structure, homodimer.

The protein resides in the cytoplasm. It carries out the reaction 4-phospho-D-erythronate + NAD(+) = (R)-3-hydroxy-2-oxo-4-phosphooxybutanoate + NADH + H(+). It participates in cofactor biosynthesis; pyridoxine 5'-phosphate biosynthesis; pyridoxine 5'-phosphate from D-erythrose 4-phosphate: step 2/5. Functionally, catalyzes the oxidation of erythronate-4-phosphate to 3-hydroxy-2-oxo-4-phosphonooxybutanoate. This chain is Erythronate-4-phosphate dehydrogenase, found in Acinetobacter baumannii (strain ATCC 17978 / DSM 105126 / CIP 53.77 / LMG 1025 / NCDC KC755 / 5377).